Here is a 548-residue protein sequence, read N- to C-terminus: Membrane protein insertase YidC (548 aa).

5 consecutive transmembrane segments (helical) span residues 6–26 (NLIL…WESD), 349–369 (TVFQ…TLLV), 424–444 (LGGC…YWAL), 455–475 (FALW…PILM), and 503–523 (PIIF…YWLV).

The protein belongs to the OXA1/ALB3/YidC family. Type 1 subfamily. In terms of assembly, interacts with the Sec translocase complex via SecD. Specifically interacts with transmembrane segments of nascent integral membrane proteins during membrane integration.

Its subcellular location is the cell inner membrane. Functionally, required for the insertion and/or proper folding and/or complex formation of integral membrane proteins into the membrane. Involved in integration of membrane proteins that insert both dependently and independently of the Sec translocase complex, as well as at least some lipoproteins. Aids folding of multispanning membrane proteins. This Aeromonas salmonicida (strain A449) protein is Membrane protein insertase YidC.